The sequence spans 81 residues: Spore coat protein F-like protein YraG (81 aa).

It belongs to the CotF family.

The protein localises to the spore coat. This Bacillus subtilis (strain 168) protein is Spore coat protein F-like protein YraG (yraG).